The following is a 237-amino-acid chain: uncharacterized protein (237 aa).

This is an uncharacterized protein from Methanocaldococcus jannaschii (strain ATCC 43067 / DSM 2661 / JAL-1 / JCM 10045 / NBRC 100440) (Methanococcus jannaschii).